The following is a 242-amino-acid chain: Sugar fermentation stimulation protein homolog (242 aa).

It belongs to the SfsA family.

In Methanosphaera stadtmanae (strain ATCC 43021 / DSM 3091 / JCM 11832 / MCB-3), this protein is Sugar fermentation stimulation protein homolog.